Consider the following 542-residue polypeptide: Putative cysteine ligase BshC (542 aa).

The stretch at 458–479 (LTKNATLLQAQIDFLHQTLQRA) forms a coiled coil.

Belongs to the BshC family.

Involved in bacillithiol (BSH) biosynthesis. May catalyze the last step of the pathway, the addition of cysteine to glucosamine malate (GlcN-Mal) to generate BSH. This chain is Putative cysteine ligase BshC, found in Geobacillus sp. (strain WCH70).